We begin with the raw amino-acid sequence, 255 residues long: Ribosomal RNA small subunit methyltransferase A (255 aa).

S-adenosyl-L-methionine-binding residues include N11, L13, G38, E59, D83, and N101.

This sequence belongs to the class I-like SAM-binding methyltransferase superfamily. rRNA adenine N(6)-methyltransferase family. RsmA subfamily.

The protein resides in the cytoplasm. It carries out the reaction adenosine(1518)/adenosine(1519) in 16S rRNA + 4 S-adenosyl-L-methionine = N(6)-dimethyladenosine(1518)/N(6)-dimethyladenosine(1519) in 16S rRNA + 4 S-adenosyl-L-homocysteine + 4 H(+). Specifically dimethylates two adjacent adenosines (A1518 and A1519) in the loop of a conserved hairpin near the 3'-end of 16S rRNA in the 30S particle. May play a critical role in biogenesis of 30S subunits. The chain is Ribosomal RNA small subunit methyltransferase A from Thiobacillus denitrificans (strain ATCC 25259 / T1).